Reading from the N-terminus, the 574-residue chain is Phosphate permease PHO89 (574 aa).

The Extracellular portion of the chain corresponds to 1-5 (MALHQ). A helical membrane pass occupies residues 6-26 (FDYIFAIAMLFAFLDAFNIGA). The Cytoplasmic segment spans residues 27-43 (NDVANSFASSISSRSLK). The helical transmembrane segment at 44 to 64 (YWQAMVLAGLCEFLGAVLAGA) threads the bilayer. Topologically, residues 65–84 (RVSGTIKNNIIDSSIFTNDP) are extracellular. A helical membrane pass occupies residues 85–105 (AVLMLTMTSALIGSSCWLTFA). The Cytoplasmic segment spans residues 106-117 (TAIGMPVSTTHS). A helical membrane pass occupies residues 118–138 (IVGGTIGAGIAAGGANGVVWG). Residues 139 to 145 (WSGVSQI) lie on the Extracellular side of the membrane. A helical transmembrane segment spans residues 146–166 (IASWFIAPILAGAIAAIVFSI). The Cytoplasmic segment spans residues 167–184 (SRFSVLEVKSLERSIKNA). A helical membrane pass occupies residues 185 to 205 (LLLVGVLVFATFSILTMLIVW). The Extracellular portion of the chain corresponds to 206 to 222 (KGSPNLHLDDLSETETA). Residues 223–243 (VSIVLTGAIASIVYFIFFYPF) form a helical membrane-spanning segment. The Cytoplasmic segment spans residues 244-354 (YRRKVLDQDW…SLLKQGPKKW (111 aa)). The tract at residues 301 to 332 (EDEENKAASNSNDSVKNKEDIQEVDLVRTETE) is disordered. Over residues 315 to 332 (VKNKEDIQEVDLVRTETE) the composition is skewed to basic and acidic residues. The helical transmembrane segment at 355 to 375 (PLLFWLVISHGWTQDVIHAQV) threads the bilayer. Residues 376–398 (NDRDMLSGDLKGMYERSKFYDNR) are Extracellular-facing. Residues 399-419 (VEYIYSVLQAITAATMSFAHG) traverse the membrane as a helical segment. Residues 420–447 (ANDVANATGPLSAVYVIWKTNTIGAKSE) lie on the Cytoplasmic side of the membrane. The chain crosses the membrane as a helical span at residues 448 to 468 (VPVWVLAYGGVALVIGCWTYG). Residues 469-503 (YNIIKNLGNKMILQSPSRGFSIELAVAITTVMATQ) are Extracellular-facing. The helical transmembrane segment at 504 to 524 (LGIPTSTTQIAVGGIVAVGLC) threads the bilayer. Residues 525–541 (NKDLKSVNWRMVAWCYS) lie on the Cytoplasmic side of the membrane. A helical transmembrane segment spans residues 542–562 (GWFLTLPIAGLIAGIINGIIL). Residues 563 to 574 (NAPRFGVEYQMT) lie on the Extracellular side of the membrane.

The protein belongs to the inorganic phosphate transporter (PiT) (TC 2.A.20) family. As to quaternary structure, forms homodimers and higher order homooligomers.

It localises to the cell membrane. It catalyses the reaction 2 Na(+)(out) + phosphate(out) = 2 Na(+)(in) + phosphate(in). Weakly stimulated by Li(+) and K(+). Inhibited by monensin. Inhibited by phosphonoacetic acid. Inhibited by methylphosphonate. Inhibited by dimethylphosphonate. Functionally, sodium-phosphate symporter. Active in early growth phase. This is Phosphate permease PHO89 (PHO89) from Saccharomyces cerevisiae (strain ATCC 204508 / S288c) (Baker's yeast).